An 87-amino-acid chain; its full sequence is Small ribosomal subunit protein bS20 (87 aa).

The tract at residues 1–22 (MANSAQARKRARQAVKQRAHNA) is disordered. Residues 7–19 (ARKRARQAVKQRA) show a composition bias toward basic residues.

It belongs to the bacterial ribosomal protein bS20 family.

Its function is as follows. Binds directly to 16S ribosomal RNA. The sequence is that of Small ribosomal subunit protein bS20 from Methylobacillus flagellatus (strain ATCC 51484 / DSM 6875 / VKM B-1610 / KT).